The sequence spans 1116 residues: Probable chitinase LysM11 (1116 aa).

In terms of domain architecture, LysM spans 233–283; that stretch reads GTYTIQTNDNCAEIAAHFGVTQDDIYDLNEDTWGWAGCGTNDLKADQVICL. The GH18 domain maps to 346–719; it reads FYHVAYFEVF…LGVDPDSDEA (374 aa). The Proton donor role is filled by Glu466. 2 residues coordinate chitin: Tyr467 and Trp701.

It belongs to the glycosyl hydrolase 18 family. Chitinase class V subfamily.

It carries out the reaction Random endo-hydrolysis of N-acetyl-beta-D-glucosaminide (1-&gt;4)-beta-linkages in chitin and chitodextrins.. Its function is as follows. Probable chitinase involved in the degradation of chitin, a component of the cell walls of fungi and exoskeletal elements of some animals (including worms and arthropods). Might be involved in manipulation of host defenses for successful infection. This Penicillium expansum (Blue mold rot fungus) protein is Probable chitinase LysM11.